The following is a 171-amino-acid chain: Glucagon family neuropeptides (171 aa).

An N-terminal signal peptide occupies residues 1–22 (MYRKALLVWLLVYGIMRCTVHS). A propeptide spanning residues 23-76 (SPTALKYPALRLEDEVYDEDGNTLPDFAFDNNPIGIGNPASVFDDMYSFYYPAE) is cleaved from the precursor. The important for receptor binding stretch occupies residues 145–153 (VKKYLAAVL). Lysine 164 is modified (lysine amide). Positions 168-171 (VAYL) are excised as a propeptide.

Belongs to the glucagon family.

The protein resides in the secreted. Primary role of GRF is to release GH from the pituitary. Its function is as follows. PACAP is a neuropeptide involved in diverse array of physiological processes through activating the PACAP subfamily of class B1 G protein-coupled receptors: VIP receptor 1 (VIPR1), VIP receptor 2 (VIPR2), and PACAP type I receptor (ADCYAP1R1). Exerts neuroprotective and general cytoprotective effects due to anti-apoptotic, anti-inflammatory, and antioxidant actions. In Pelophylax ridibundus (Marsh frog), this protein is Glucagon family neuropeptides (adcyap1).